The following is a 317-amino-acid chain: Protoheme IX farnesyltransferase (317 aa).

A run of 9 helical transmembrane segments spans residues 36 to 56 (VMVL…ATVN), 57 to 77 (PVIA…SGCL), 108 to 128 (LAFG…ASNW), 129 to 149 (LAAG…SMWL), 157 to 177 (IVIG…AVTG), 184 to 204 (LVLF…LALV), 230 to 247 (IVWY…PVWL), 251 to 273 (GWLY…VQVY), and 284 to 304 (AAMG…SALL).

The protein belongs to the UbiA prenyltransferase family. Protoheme IX farnesyltransferase subfamily.

Its subcellular location is the cell inner membrane. The catalysed reaction is heme b + (2E,6E)-farnesyl diphosphate + H2O = Fe(II)-heme o + diphosphate. It participates in porphyrin-containing compound metabolism; heme O biosynthesis; heme O from protoheme: step 1/1. Functionally, converts heme B (protoheme IX) to heme O by substitution of the vinyl group on carbon 2 of heme B porphyrin ring with a hydroxyethyl farnesyl side group. The polypeptide is Protoheme IX farnesyltransferase (Methylorubrum populi (strain ATCC BAA-705 / NCIMB 13946 / BJ001) (Methylobacterium populi)).